Here is a 273-residue protein sequence, read N- to C-terminus: Undecaprenyl-diphosphatase (273 aa).

Helical transmembrane passes span 4 to 24, 43 to 63, 83 to 103, 109 to 129, 184 to 204, 218 to 238, and 248 to 268; these read FLLL…FLPI, KGKV…CWEY, FVLN…LFIK, LFHP…ILWA, ATEF…FYDL, VFAI…RGLL, and VFAW…YSGM.

This sequence belongs to the UppP family.

The protein resides in the cell inner membrane. It carries out the reaction di-trans,octa-cis-undecaprenyl diphosphate + H2O = di-trans,octa-cis-undecaprenyl phosphate + phosphate + H(+). In terms of biological role, catalyzes the dephosphorylation of undecaprenyl diphosphate (UPP). Confers resistance to bacitracin. The sequence is that of Undecaprenyl-diphosphatase from Nitrosospira multiformis (strain ATCC 25196 / NCIMB 11849 / C 71).